The sequence spans 285 residues: Casein kinase II subunit beta-2 (285 aa).

The tract at residues 226–285 (FKDAEDEAELDDDDEEEEEEEEEEEELAAMDEAEGAQQQHAAAAAGTATGGVAAGGEGVH) is disordered. Residues 229-259 (AEDEAELDDDDEEEEEEEEEEEELAAMDEAE) are compositionally biased toward acidic residues. Positions 260–272 (GAQQQHAAAAAGT) are enriched in low complexity. The span at 273–285 (ATGGVAAGGEGVH) shows a compositional bias: gly residues.

This sequence belongs to the casein kinase 2 subunit beta family. As to quaternary structure, tetramer composed of two alpha chains, one beta chain and one beta' chain. Post-translationally, phosphorylated by alpha subunit.

Regulatory subunit of casein kinase II/CK2. As part of the kinase complex regulates the basal catalytic activity of the alpha subunit a constitutively active serine/threonine-protein kinase that phosphorylates a large number of substrates containing acidic residues C-terminal to the phosphorylated serine or threonine. The protein is Casein kinase II subunit beta-2 (ckb-2) of Neurospora crassa (strain ATCC 24698 / 74-OR23-1A / CBS 708.71 / DSM 1257 / FGSC 987).